The following is a 497-amino-acid chain: Probable cytosol aminopeptidase (497 aa).

Mn(2+)-binding residues include Lys-267 and Asp-272. The active site involves Lys-279. 3 residues coordinate Mn(2+): Asp-290, Asp-349, and Glu-351. The active site involves Arg-353.

This sequence belongs to the peptidase M17 family. The cofactor is Mn(2+).

It localises to the cytoplasm. The enzyme catalyses Release of an N-terminal amino acid, Xaa-|-Yaa-, in which Xaa is preferably Leu, but may be other amino acids including Pro although not Arg or Lys, and Yaa may be Pro. Amino acid amides and methyl esters are also readily hydrolyzed, but rates on arylamides are exceedingly low.. It carries out the reaction Release of an N-terminal amino acid, preferentially leucine, but not glutamic or aspartic acids.. Presumably involved in the processing and regular turnover of intracellular proteins. Catalyzes the removal of unsubstituted N-terminal amino acids from various peptides. The protein is Probable cytosol aminopeptidase of Nitrosomonas eutropha (strain DSM 101675 / C91 / Nm57).